Reading from the N-terminus, the 124-residue chain is Small ribosomal subunit protein uS12 (124 aa).

D90 is subject to 3-methylthioaspartic acid.

The protein belongs to the universal ribosomal protein uS12 family. Part of the 30S ribosomal subunit. Contacts proteins S8 and S17. May interact with IF1 in the 30S initiation complex.

Functionally, with S4 and S5 plays an important role in translational accuracy. In terms of biological role, interacts with and stabilizes bases of the 16S rRNA that are involved in tRNA selection in the A site and with the mRNA backbone. Located at the interface of the 30S and 50S subunits, it traverses the body of the 30S subunit contacting proteins on the other side and probably holding the rRNA structure together. The combined cluster of proteins S8, S12 and S17 appears to hold together the shoulder and platform of the 30S subunit. This chain is Small ribosomal subunit protein uS12, found in Wolbachia pipientis wMel.